The primary structure comprises 428 residues: C4-dicarboxylate transport protein (428 aa).

9 helical membrane-spanning segments follow: residues 8–28 (SLYVQVLTAIAIGILLGHFYP), 44–64 (LIKMVIAPVIFCTVVTGIAGM), 76–96 (VALLYFEVVSTIALIIGLIIV), 142–162 (IGAFASGNILQVLLFAVLFGF), 184–204 (VIFGIINMIMRLAPIGAFGAM), 222–242 (LIICFYITCILFVVVVLGSIA), 289–309 (VVGLVIPTGYSFNLDGTSIYL), 326–346 (IFHQITLLVVLLLSSKGAAGV), and 352–372 (IVLAATISAVGHLPVAGLALI).

It belongs to the dicarboxylate/amino acid:cation symporter (DAACS) (TC 2.A.23) family.

The protein resides in the cell inner membrane. Responsible for the transport of dicarboxylates such as succinate, fumarate, and malate from the periplasm across the membrane. This Klebsiella pneumoniae (strain 342) protein is C4-dicarboxylate transport protein.